The following is a 79-amino-acid chain: Exodeoxyribonuclease 7 small subunit (79 aa).

The protein belongs to the XseB family. As to quaternary structure, heterooligomer composed of large and small subunits.

The protein localises to the cytoplasm. The catalysed reaction is Exonucleolytic cleavage in either 5'- to 3'- or 3'- to 5'-direction to yield nucleoside 5'-phosphates.. Functionally, bidirectionally degrades single-stranded DNA into large acid-insoluble oligonucleotides, which are then degraded further into small acid-soluble oligonucleotides. This chain is Exodeoxyribonuclease 7 small subunit, found in Syntrophus aciditrophicus (strain SB).